The following is a 325-amino-acid chain: Solute carrier family 35 member B1 (325 aa).

8 consecutive transmembrane segments (helical) span residues 18-38 (PVCF…QESI), 54-74 (FALS…KLLI), 88-108 (WLYA…NSAL), 139-159 (YPLA…LFMY), 171-191 (IFGY…LTGV), 213-233 (LWST…WEFL), 246-266 (ILLF…TVVY), and 288-308 (VILF…LVFL). The short motif at 321-325 (KKTSH) is the Di-lysine motif element.

This sequence belongs to the nucleotide-sugar transporter family. SLC35B subfamily.

Its subcellular location is the endoplasmic reticulum membrane. Probable sugar transporter. This chain is Solute carrier family 35 member B1 (SLC35B1), found in Gallus gallus (Chicken).